Consider the following 1252-residue polypeptide: DNA-directed RNA polymerase subunit beta (1252 aa).

This sequence belongs to the RNA polymerase beta chain family. In terms of assembly, the RNAP catalytic core consists of 2 alpha, 1 beta, 1 beta' and 1 omega subunit. When a sigma factor is associated with the core the holoenzyme is formed, which can initiate transcription.

It carries out the reaction RNA(n) + a ribonucleoside 5'-triphosphate = RNA(n+1) + diphosphate. Its function is as follows. DNA-dependent RNA polymerase catalyzes the transcription of DNA into RNA using the four ribonucleoside triphosphates as substrates. The polypeptide is DNA-directed RNA polymerase subunit beta (Chlamydia abortus (strain DSM 27085 / S26/3) (Chlamydophila abortus)).